A 467-amino-acid polypeptide reads, in one-letter code: Zinc finger protein ZIC 3 (467 aa).

The interval 66–107 is disordered; it reads LSSGQSSAFTPQGSGYANALGHHHHHHHHHHHTSQVPSYGGA. The span at 67 to 80 shows a compositional bias: polar residues; that stretch reads SSGQSSAFTPQGSG. The span at 86–98 shows a compositional bias: basic residues; sequence GHHHHHHHHHHHT. Residue K248 forms a Glycyl lysine isopeptide (Lys-Gly) (interchain with G-Cter in SUMO2) linkage. The C2H2-type 1; atypical zinc finger occupies 251–286; that stretch reads LSCKWIDEAQLSRPKKSCDRTFSTMHELVTHVTMEH. Residues 295–322 form a C2H2-type 2; atypical zinc finger; it reads HVCYWEECPREGKSFKAKYKLVNHIRVH. 2 short sequence motifs (nuclear localization signal) span residues 297-322 and 330-352; these read CYWE…IRVH and CPFP…KRTH. C2H2-type zinc fingers lie at residues 328–352, 358–382, and 388–410; these read FPCP…KRTH, FKCE…MHVH, and YICK…MKVH. Residues 404-467 are disordered; the sequence is RKHMKVHESQ…LPPNFNEWYV (64 aa). Residues 412–428 are compositionally biased toward low complexity; it reads SQGSDSSPAASSGYESS. The segment covering 435–455 has biased composition (polar residues); it reads SANSKDTTKTPSAVQTSTSHN.

This sequence belongs to the GLI C2H2-type zinc-finger protein family. As to quaternary structure, interacts (via the C2H2-type domains 3, 4 and 5) with MDFIC (via the C2H2-type domains 3, 4 and 5); the interaction reduces its transcriptional activity. Interacts with KPNA1 and KPNA6. Interacts (via C2H2-type domains 3, 4 and 5) with GLI3; the interaction enhances its transcriptional activity.

The protein localises to the nucleus. Its subcellular location is the cytoplasm. In terms of biological role, acts as a transcriptional activator. Required in the earliest stages in both axial midline development and left-right (LR) asymmetry specification. Binds to the minimal GLI-consensus sequence 5'-GGGTGGTC-3'. This Homo sapiens (Human) protein is Zinc finger protein ZIC 3 (ZIC3).